The chain runs to 1468 residues: ABC transporter G family member 34 (1468 aa).

The segment at 33 to 53 (NGAFSRSSSSSSRRMRGEEDD) is disordered. One can recognise an ABC transporter 1 domain in the interval 178–450 (ANALGILPTR…FELMGFKCPE (273 aa)). 211–218 (GPPGSGKT) contacts ATP. In terms of domain architecture, ABC transmembrane type-2 1 spans 528–741 (ELLKANIDRE…AQNAVSVNEF (214 aa)). 6 consecutive transmembrane segments (helical) span residues 546 to 566 (FVYI…MTVF), 575 to 595 (SVAD…MIML), 634 to 654 (SPMS…VIGF), 666 to 686 (LLML…GGAA), 690 to 710 (IVAN…GGFI), and 778 to 798 (IGFG…TLAL). The ABC transporter 2 domain maps to 871-1123 (LTFEDIKYSV…ELIKYFEGIQ (253 aa)). 916-923 (GVSGAGKT) serves as a coordination point for ATP. The ABC transmembrane type-2 2 domain maps to 1196 to 1410 (IQCLACLWKQ…TLYGLIVSQY (215 aa)). Helical transmembrane passes span 1217 to 1237 (AIRL…FWDL), 1247 to 1267 (LFNA…LNGQ), 1303 to 1323 (FPYT…MIGF), 1330 to 1350 (FFWY…YGMM), 1360 to 1380 (VASI…GFVI), 1387 to 1407 (VWWR…GLIV), and 1440 to 1460 (FVAV…GFAI).

The protein belongs to the ABC transporter superfamily. ABCG family. PDR (TC 3.A.1.205) subfamily.

The protein resides in the membrane. In terms of biological role, may be a general defense protein. The chain is ABC transporter G family member 34 from Oryza sativa subsp. japonica (Rice).